We begin with the raw amino-acid sequence, 396 residues long: Putative nickel insertion protein (396 aa).

Belongs to the LarC family.

This chain is Putative nickel insertion protein, found in Wolinella succinogenes (strain ATCC 29543 / DSM 1740 / CCUG 13145 / JCM 31913 / LMG 7466 / NCTC 11488 / FDC 602W) (Vibrio succinogenes).